The primary structure comprises 560 residues: Terminal uridylyltransferase Tailor (560 aa).

The segment at 169-197 (EQHPKPNPNNQPVQPHPTHQTKQEKKQAQ) is disordered. The span at 176–188 (PNNQPVQPHPTHQ) shows a compositional bias: low complexity. 2 residues coordinate Mg(2+): Asp278 and Asp280. Residues 455–522 (LRNFFAYFAK…VVQDPIQLNH (68 aa)) form the PAP-associated domain.

Requires Mg(2+) as cofactor.

Its subcellular location is the cytoplasm. It carries out the reaction RNA(n) + UTP = RNA(n)-3'-uridine ribonucleotide + diphosphate. Its function is as follows. Uridylyltransferase which mediates terminal uridylation of miRNAs, leading to their degradation. Has high specificity for splicing-derived miRNAs (mirtrons) and other miRNA substrates containing a 3'-G terminal nucleotide. Appears to be a major suppressor of mirtron biogenesis. This chain is Terminal uridylyltransferase Tailor, found in Drosophila melanogaster (Fruit fly).